Reading from the N-terminus, the 390-residue chain is MSQSIIESKNKKDVNNGKIPAKETILSPRFYTTDFEAMENMDLSINEEELEAICEEFRKDYNRHHFVRNSEFDGAAEKLDPETRELFVDFLEGSCTSEFSGFLLYKELSRRIKDKNPLLAECFAHMARDEARHAGFLNKSMSDFGLQLDLGFLTANKDYTYFPPRSIFYATYLSEKIGYWRYIAIYRHLEKNPDSKIFPLFNYFENWCQDENRHGDFFDALMKAQPRTVKSLSQKINIGGTTFTHPLFDYFHRFRYFLNNLPITSKLWSRFFLLAVFATMYARDLGIKKDFYSSLGLDAREYDQYVINKTNETSARVFPVVLDVYDKSFYGRLDKIVENNKVLSNIANSEENKVSKTLKKLPTYLSNGYQLLRLYLLKPLDSKDFQPSIR.

The protein belongs to the AcsF family. The cofactor is Fe cation.

The enzyme catalyses Mg-protoporphyrin IX 13-monomethyl ester + 3 NADPH + 3 O2 + 2 H(+) = 3,8-divinyl protochlorophyllide a + 3 NADP(+) + 5 H2O. The protein operates within porphyrin-containing compound metabolism; chlorophyll biosynthesis (light-independent). In terms of biological role, catalyzes the formation of the isocyclic ring in chlorophyll biosynthesis. Mediates the cyclase reaction, which results in the formation of divinylprotochlorophyllide (Pchlide) characteristic of all chlorophylls from magnesium-protoporphyrin IX 13-monomethyl ester (MgPMME). The sequence is that of Magnesium-protoporphyrin IX monomethyl ester [oxidative] cyclase from Prochlorococcus marinus (strain MIT 9312).